Consider the following 126-residue polypeptide: uncharacterized protein (126 aa).

The helical transmembrane segment at 5-25 threads the bilayer; that stretch reads LIQHITSIFVFSFFFLFFFFS.

It localises to the membrane. This is an uncharacterized protein from Saccharomyces cerevisiae (strain ATCC 204508 / S288c) (Baker's yeast).